Reading from the N-terminus, the 395-residue chain is LIM/homeobox protein Lhx3 (395 aa).

LIM zinc-binding domains follow at residues 28–78 (CAGC…CKED) and 87–141 (CAAC…CKAD). The homeobox DNA-binding region spans 154-213 (AKRPRTTITAKQLETLKNAYNNSPKPARHVREQLSSETGLDMRVVQVWFQNRRAKEKRLK). Disordered stretches follow at residues 209–325 (EKRL…LQAL) and 348–395 (GGQG…HAQF). Positions 257–276 (DEPSMSEMSHSNGIYSNLSE) are enriched in polar residues.

The protein localises to the nucleus. Transcription factor. Defines subclasses of motoneurons that segregate into columns in the spinal cord and select distinct axon pathways. Acts in conjunction with LIM-1, ISL-1 and ISL-2. The polypeptide is LIM/homeobox protein Lhx3 (LHX3) (Gallus gallus (Chicken)).